The chain runs to 100 residues: MELNPTEKDKLLIFTAGLVAERRKARGLKLNYPEAVAFISAALLEGARDGMTVSELMHFGTTLLKREDVMDGVPEMIAEVQVEATFPDGSKLVTVHQPIV.

The protein belongs to the urease gamma subunit family. Heterotrimer of UreA (gamma), UreB (beta) and UreC (alpha) subunits. Three heterotrimers associate to form the active enzyme.

The protein resides in the cytoplasm. It carries out the reaction urea + 2 H2O + H(+) = hydrogencarbonate + 2 NH4(+). It functions in the pathway nitrogen metabolism; urea degradation; CO(2) and NH(3) from urea (urease route): step 1/1. This chain is Urease subunit gamma, found in Acinetobacter baumannii (strain AB307-0294).